The sequence spans 275 residues: Photosystem II extrinsic protein O (275 aa).

The first 28 residues, 1 to 28, serve as a signal peptide directing secretion; that stretch reads MRFRTLLIAFLALCLGLITACSEGPANA.

It belongs to the PsbO family. In terms of assembly, PSII is composed of 1 copy each of membrane proteins PsbA, PsbB, PsbC, PsbD, PsbE, PsbF, PsbH, PsbI, PsbJ, PsbK, PsbL, PsbM, PsbT, PsbX, PsbY, PsbZ, Psb30/Ycf12, peripheral proteins PsbO, CyanoQ (PsbQ), PsbU, PsbV and a large number of cofactors. It forms dimeric complexes.

The protein localises to the cellular thylakoid membrane. In terms of biological role, one of the extrinsic, lumenal subunits of photosystem II (PSII), which stabilize and protect the oxygen-evolving complex. PSII is a light-driven water plastoquinone oxidoreductase, using light energy to abstract electrons from H(2)O, generating a proton gradient subsequently used for ATP formation. Required for dimerization of PSII and for binding of PsbQ to PSII. The polypeptide is Photosystem II extrinsic protein O (Crocosphaera subtropica (strain ATCC 51142 / BH68) (Cyanothece sp. (strain ATCC 51142))).